Here is a 176-residue protein sequence, read N- to C-terminus: Large ribosomal subunit protein uL6 (176 aa).

Belongs to the universal ribosomal protein uL6 family. In terms of assembly, part of the 50S ribosomal subunit.

In terms of biological role, this protein binds to the 23S rRNA, and is important in its secondary structure. It is located near the subunit interface in the base of the L7/L12 stalk, and near the tRNA binding site of the peptidyltransferase center. This chain is Large ribosomal subunit protein uL6, found in Methanosarcina mazei (strain ATCC BAA-159 / DSM 3647 / Goe1 / Go1 / JCM 11833 / OCM 88) (Methanosarcina frisia).